Reading from the N-terminus, the 194-residue chain is Large ribosomal subunit protein uL6x (194 aa).

Thr-75 carries the phosphothreonine modification.

This sequence belongs to the universal ribosomal protein uL6 family.

In Arabidopsis thaliana (Mouse-ear cress), this protein is Large ribosomal subunit protein uL6x (RPL9D).